Here is a 350-residue protein sequence, read N- to C-terminus: Putative D-xylulose reductase (350 aa).

Residues cysteine 43, histidine 68, and glutamate 154 each contribute to the Zn(2+) site.

The protein belongs to the zinc-containing alcohol dehydrogenase family. Zn(2+) is required as a cofactor.

The catalysed reaction is xylitol + NAD(+) = D-xylulose + NADH + H(+). The sequence is that of Putative D-xylulose reductase from Agrobacterium fabrum (strain C58 / ATCC 33970) (Agrobacterium tumefaciens (strain C58)).